A 496-amino-acid chain; its full sequence is Putative zinc finger CCCH domain-containing protein 48 (496 aa).

2 disordered regions span residues 1–77 (MADS…QPVH) and 108–194 (MGAG…HPDD). A compositionally biased stretch (acidic residues) spans 143–156 (HLAEEEEEEEEEHY). 3 C3H1-type zinc fingers span residues 377-406 (EHKT…HGED), 439-467 (KYKT…HGEV), and 469-496 (LGKK…RHSY).

The polypeptide is Putative zinc finger CCCH domain-containing protein 48 (Oryza sativa subsp. japonica (Rice)).